Consider the following 478-residue polypeptide: Aspartyl/glutamyl-tRNA(Asn/Gln) amidotransferase subunit B (478 aa).

It belongs to the GatB/GatE family. GatB subfamily. As to quaternary structure, heterotrimer of A, B and C subunits.

It carries out the reaction L-glutamyl-tRNA(Gln) + L-glutamine + ATP + H2O = L-glutaminyl-tRNA(Gln) + L-glutamate + ADP + phosphate + H(+). The enzyme catalyses L-aspartyl-tRNA(Asn) + L-glutamine + ATP + H2O = L-asparaginyl-tRNA(Asn) + L-glutamate + ADP + phosphate + 2 H(+). Allows the formation of correctly charged Asn-tRNA(Asn) or Gln-tRNA(Gln) through the transamidation of misacylated Asp-tRNA(Asn) or Glu-tRNA(Gln) in organisms which lack either or both of asparaginyl-tRNA or glutaminyl-tRNA synthetases. The reaction takes place in the presence of glutamine and ATP through an activated phospho-Asp-tRNA(Asn) or phospho-Glu-tRNA(Gln). In Alkalilimnicola ehrlichii (strain ATCC BAA-1101 / DSM 17681 / MLHE-1), this protein is Aspartyl/glutamyl-tRNA(Asn/Gln) amidotransferase subunit B.